The sequence spans 348 residues: Dihydroorotase (348 aa).

Zn(2+)-binding residues include histidine 17 and histidine 19. Residues 19-21 (HLR) and asparagine 45 each bind substrate. Zn(2+) contacts are provided by lysine 103, histidine 140, and histidine 178. Position 103 is an N6-carboxylysine (lysine 103). Residue histidine 140 participates in substrate binding. Residue leucine 223 coordinates substrate. Aspartate 251 serves as a coordination point for Zn(2+). Aspartate 251 is a catalytic residue. Residues histidine 255 and alanine 267 each contribute to the substrate site.

Belongs to the metallo-dependent hydrolases superfamily. DHOase family. Class II DHOase subfamily. As to quaternary structure, homodimer. Zn(2+) serves as cofactor.

It carries out the reaction (S)-dihydroorotate + H2O = N-carbamoyl-L-aspartate + H(+). The protein operates within pyrimidine metabolism; UMP biosynthesis via de novo pathway; (S)-dihydroorotate from bicarbonate: step 3/3. Catalyzes the reversible cyclization of carbamoyl aspartate to dihydroorotate. The sequence is that of Dihydroorotase from Escherichia coli O157:H7.